A 438-amino-acid polypeptide reads, in one-letter code: Serine hydroxymethyltransferase (438 aa).

Residues leucine 119 and 123 to 125 each bind (6S)-5,6,7,8-tetrahydrofolate; that span reads GHL. Lysine 228 carries the N6-(pyridoxal phosphate)lysine modification. 370–372 contributes to the (6S)-5,6,7,8-tetrahydrofolate binding site; that stretch reads SPF.

This sequence belongs to the SHMT family. In terms of assembly, homodimer. Pyridoxal 5'-phosphate is required as a cofactor.

The protein localises to the cytoplasm. The enzyme catalyses (6R)-5,10-methylene-5,6,7,8-tetrahydrofolate + glycine + H2O = (6S)-5,6,7,8-tetrahydrofolate + L-serine. The protein operates within one-carbon metabolism; tetrahydrofolate interconversion. Its pathway is amino-acid biosynthesis; glycine biosynthesis; glycine from L-serine: step 1/1. In terms of biological role, catalyzes the reversible interconversion of serine and glycine with tetrahydrofolate (THF) serving as the one-carbon carrier. This reaction serves as the major source of one-carbon groups required for the biosynthesis of purines, thymidylate, methionine, and other important biomolecules. Also exhibits THF-independent aldolase activity toward beta-hydroxyamino acids, producing glycine and aldehydes, via a retro-aldol mechanism. The sequence is that of Serine hydroxymethyltransferase from Pelodictyon phaeoclathratiforme (strain DSM 5477 / BU-1).